Here is a 394-residue protein sequence, read N- to C-terminus: Putative F-box protein At5g66830 (394 aa).

Positions 17–63 (DWCWSKLPSDLMQFVFDRLGFADFQRAKSVCSSWLSVSRNSQPNNQI) constitute an F-box domain.

This chain is Putative F-box protein At5g66830, found in Arabidopsis thaliana (Mouse-ear cress).